The sequence spans 121 residues: Cell division protein FtsL (121 aa).

Topologically, residues 1–34 (MISRVTEALSKVKGSIGSNERHALPGVIGDDLLR) are cytoplasmic. The helical transmembrane segment at 35 to 57 (FGKLPLCLFICIILTAVTVVTTA) threads the bilayer. The Periplasmic segment spans residues 58 to 121 (HHTRLLTAQR…PSQENIVVQK (64 aa)).

The protein belongs to the FtsL family. Part of a complex composed of FtsB, FtsL and FtsQ.

The protein resides in the cell inner membrane. Its function is as follows. Essential cell division protein. May link together the upstream cell division proteins, which are predominantly cytoplasmic, with the downstream cell division proteins, which are predominantly periplasmic. This is Cell division protein FtsL from Salmonella typhimurium (strain LT2 / SGSC1412 / ATCC 700720).